Consider the following 385-residue polypeptide: V-type proton ATPase subunit C (385 aa).

This sequence belongs to the V-ATPase C subunit family. V-ATPase is a heteromultimeric enzyme made up of two complexes: the ATP-hydrolytic V1 complex and the proton translocation V0 complex. The V1 complex consists of three catalytic AB heterodimers that form a heterohexamer, three peripheral stalks each consisting of EG heterodimers, one central rotor including subunits D and F, and the regulatory subunits C and H. The proton translocation complex V0 consists of the proton transport subunit a, a ring of proteolipid subunits c9c'', rotary subunit d, subunits e and f, and the accessory subunits vah-19/Ac45 and vah-20/PRR. Interacts with V-type proton ATPase subunits a1 unc-32, a2 vha-5 and a3 vha-6.

The protein localises to the cytoplasm. Its subcellular location is the membrane. Its function is as follows. Subunit of the V1 complex of vacuolar(H+)-ATPase (V-ATPase), a multisubunit enzyme composed of a peripheral complex (V1) that hydrolyzes ATP and a membrane integral complex (V0) that translocates protons. V-ATPase is responsible for acidifying and maintaining the pH of intracellular compartments and in some cell types, is targeted to the plasma membrane, where it is responsible for acidifying the extracellular environment. Subunit C is necessary for the assembly of the catalytic sector of the enzyme and is likely to have a specific function in its catalytic activity. Has roles in embryogenesis and ovulation. The polypeptide is V-type proton ATPase subunit C (Caenorhabditis briggsae).